A 218-amino-acid chain; its full sequence is Octanoyltransferase (218 aa).

In terms of domain architecture, BPL/LPL catalytic spans 30 to 213 (GEIEDTLILV…YFSEVFNYDI (184 aa)). Substrate contacts are provided by residues 75-82 (RGGDVTYH), 143-145 (AIG), and 156-158 (GFA). Cysteine 174 serves as the catalytic Acyl-thioester intermediate.

It belongs to the LipB family.

The protein localises to the cytoplasm. The catalysed reaction is octanoyl-[ACP] + L-lysyl-[protein] = N(6)-octanoyl-L-lysyl-[protein] + holo-[ACP] + H(+). It functions in the pathway protein modification; protein lipoylation via endogenous pathway; protein N(6)-(lipoyl)lysine from octanoyl-[acyl-carrier-protein]: step 1/2. Functionally, catalyzes the transfer of endogenously produced octanoic acid from octanoyl-acyl-carrier-protein onto the lipoyl domains of lipoate-dependent enzymes. Lipoyl-ACP can also act as a substrate although octanoyl-ACP is likely to be the physiological substrate. This chain is Octanoyltransferase, found in Alkaliphilus metalliredigens (strain QYMF).